The following is a 275-amino-acid chain: Lectin (275 aa).

The signal sequence occupies residues 1 to 30 (MASLQTQMISFYLIFLSILLTTIFFFKVNS). Positions 111 and 129 each coordinate D-glucose. Residues Glu149 and Asp151 each coordinate Mn(2+). Positions 151, 153, 155, and 159 each coordinate Ca(2+). Mn(2+)-binding residues include Asp159 and His166. A propeptide spanning residues 211-217 (NSLEEEN) is cleaved from the precursor. Residues Gly246 and Ala247 each contribute to the D-glucose site. Residues 270 to 275 (KQAADA) constitute a propeptide that is removed on maturation.

Belongs to the leguminous lectin family. In terms of assembly, heterotetramer of two alpha and two beta chains. The mature form consists of two chains, alpha and beta, produced by cleavage of the immature protein. These remain cleaved, yet fold together to form one subunit.

Functionally, D-mannose specific lectin. This is Lectin from Lens culinaris subsp. orientalis (Oriental wild lentil).